A 337-amino-acid polypeptide reads, in one-letter code: D-alanine--D-alanine ligase (337 aa).

The 207-residue stretch at 124-330 (KMWFSALGIP…FTEYLSLVIN (207 aa)) folds into the ATP-grasp domain. 154–209 (ALANWGSIFIKAASQGSSVGCYKVDDSSKVAQVLKDAFGYAPYVVVEKTIKARELE) contacts ATP. Residues aspartate 284, glutamate 297, and asparagine 299 each coordinate Mg(2+).

It belongs to the D-alanine--D-alanine ligase family. Mg(2+) serves as cofactor. The cofactor is Mn(2+).

It is found in the cytoplasm. It catalyses the reaction 2 D-alanine + ATP = D-alanyl-D-alanine + ADP + phosphate + H(+). Its pathway is cell wall biogenesis; peptidoglycan biosynthesis. Functionally, cell wall formation. In Shewanella sp. (strain W3-18-1), this protein is D-alanine--D-alanine ligase.